Here is a 755-residue protein sequence, read N- to C-terminus: Probable ubiquitin carboxyl-terminal hydrolase creB (755 aa).

The interval Met-1 to Pro-32 is disordered. Residues Phe-55–Thr-468 form the USP domain. The active-site Nucleophile is Cys-64. Disordered stretches follow at residues Glu-119–Glu-146 and Glu-237–Thr-270. The segment covering Glu-237 to Arg-246 has biased composition (basic and acidic residues). Positions Ala-254 to Thr-270 are enriched in polar residues. Catalysis depends on His-419, which acts as the Proton acceptor. The disordered stretch occupies residues Thr-495–Ser-755. A compositionally biased stretch (low complexity) spans Glu-547–Thr-560. Positions Lys-577–Lys-648 are enriched in basic and acidic residues. A coiled-coil region spans residues Ser-581 to Ser-630. The span at Ser-654–Arg-666 shows a compositional bias: basic residues. Residues Asn-693 to Gly-709 are compositionally biased toward polar residues. Residues Thr-718–Asp-733 show a composition bias toward basic and acidic residues. Over residues Arg-734 to Ser-755 the composition is skewed to basic residues.

Belongs to the peptidase C19 family. In terms of assembly, interacts with creA, creC and qutD.

It carries out the reaction Thiol-dependent hydrolysis of ester, thioester, amide, peptide and isopeptide bonds formed by the C-terminal Gly of ubiquitin (a 76-residue protein attached to proteins as an intracellular targeting signal).. Ubiquitin thioesterase component of the regulatory network controlling carbon source utilization through ubiquitination and deubiquitination involving creA, creB, creC, creD and acrB. Deubiquitinates the creA catabolic repressor and the quinate permease qutD. Also plays a role in response to carbon starvation and the control of extracellular proteases activity. In Aspergillus flavus (strain ATCC 200026 / FGSC A1120 / IAM 13836 / NRRL 3357 / JCM 12722 / SRRC 167), this protein is Probable ubiquitin carboxyl-terminal hydrolase creB (creB).